Reading from the N-terminus, the 686-residue chain is Delta-like protein 4 (686 aa).

The first 27 residues, 1–27, serve as a signal peptide directing secretion; the sequence is MTPGSRSACRWALLLLAVLWPQQRAAG. Topologically, residues 28–530 are extracellular; it reads SGIFQLRLQE…PVGLPPSFPW (503 aa). 2 disulfide bridges follow: cysteine 51–cysteine 55 and cysteine 62–cysteine 75. N-linked (GlcNAc...) asparagine glycans are attached at residues asparagine 79, asparagine 109, and asparagine 162. A DSL domain is found at 174–218; the sequence is VVCSDNYYGDSCSRLCKKRDDHFGHYECQPDGSLSCLPGWTGKYC. Cysteine 176 and cysteine 185 are joined by a disulfide. Interaction with Notch1 stretches follow at residues 186-188 and 192-196; these read SRL and RDDHF. 26 cysteine pairs are disulfide-bonded: cysteine 189/cysteine 201, cysteine 209/cysteine 218, cysteine 223/cysteine 234, cysteine 227/cysteine 240, cysteine 242/cysteine 251, cysteine 254/cysteine 265, cysteine 260/cysteine 271, cysteine 273/cysteine 282, cysteine 289/cysteine 301, cysteine 295/cysteine 311, cysteine 313/cysteine 322, cysteine 329/cysteine 340, cysteine 334/cysteine 349, cysteine 351/cysteine 360, cysteine 367/cysteine 378, cysteine 372/cysteine 389, cysteine 391/cysteine 400, cysteine 407/cysteine 418, cysteine 412/cysteine 427, cysteine 429/cysteine 438, cysteine 445/cysteine 456, cysteine 450/cysteine 465, cysteine 467/cysteine 476, cysteine 485/cysteine 496, cysteine 490/cysteine 507, and cysteine 509/cysteine 518. EGF-like domains lie at 219-252, 256-283, 285-323, 325-361, 363-401, 403-439, 441-477, and 481-519; these read DQPICLSGCHEQNGYCSKPDECNCRPGWQGPLCN, PHNGCRHGTCTIPWQCACDEGWGGLFCD, DLNYCTHHSPCKNGSTCSNSGPRGYTCTCLPGYTGEHCE, ELSKCASNPCRNGGSCKDHENSYHCLCPPGYYGQHCE, STLTCADSPCFNGGSCRERNQGASYACECPPNFTGSNCE, KVDRCTSNPCANGGQCLNRGPSRTCRCRPGFTGTHCE, HISDCARSPCAHGGTCHDLENGPVCTCPAGFSGRRCE, and TNDACASGPCFNGATCYTGLSPNNFVCNCPYGFVGSRCE. The helical transmembrane segment at 531-551 threads the bilayer; the sequence is VAVSLGVGLVVLLVLLVMVAV. Over 552-686 the chain is Cytoplasmic; it reads AVRQLRLRRP…RNECVIATEV (135 aa).

As to quaternary structure, interacts with NOTCH4. Interacts (via N-terminal DSL and MNNL domains) with NOTCH1 (via EGF-like domains).

It localises to the cell membrane. Involved in the Notch signaling pathway as Notch ligand. Activates NOTCH1 and NOTCH4. Involved in angiogenesis; negatively regulates endothelial cell proliferation and migration and angiogenic sprouting. Essential for retinal progenitor proliferation. Required for suppressing rod fates in late retinal progenitors as well as for proper generation of other retinal cell types. During spinal cord neurogenesis, inhibits V2a interneuron fate. This Rattus norvegicus (Rat) protein is Delta-like protein 4.